A 986-amino-acid chain; its full sequence is Epidermin biosynthesis protein EpiB (986 aa).

This sequence to B.subtilis SpaB and L.lactis NisB.

It is found in the cell membrane. Its function is as follows. Involved in the post-translational modification of the lantibiotic epidermin. This is Epidermin biosynthesis protein EpiB (epiB) from Staphylococcus epidermidis.